We begin with the raw amino-acid sequence, 236 residues long: MADDWESAADSEIVIRPNAANNINKWEGEDDDEDVKESWEDEEEKKDEEKPTKTEAPVKTKPNKALKAKLEEQERLKEEEEQKRLAEMTPEEKLAEKLRLQKIQEESDLKSALETFGVTSIGGGLDAFNPESKEEFKEFGATLSWKVAQYRESIHFPQFIEDLVRSLCCNLSAADIKKVKMSVESLHSEKLKMEKAAAKKSAMKGKGKVSLRTENDDIDGYQKYGNDFTDDYDDFM.

The segment at 1-86 (MADDWESAAD…KEEEEQKRLA (86 aa)) is disordered. The segment covering 28–46 (GEDDDEDVKESWEDEEEKK) has biased composition (acidic residues). 2 stretches are compositionally biased toward basic and acidic residues: residues 47-58 (DEEKPTKTEAPV) and 68-86 (AKLE…KRLA). The stretch at 61–115 (KPNKALKAKLEEQERLKEEEEQKRLAEMTPEEKLAEKLRLQKIQEESDLKSALET) forms a coiled coil.

This sequence belongs to the eIF-3 subunit J family. Component of the eukaryotic translation initiation factor 3 (eIF-3) complex. The eIF-3 complex interacts with pix.

The protein resides in the cytoplasm. Component of the eukaryotic translation initiation factor 3 (eIF-3) complex, which is involved in protein synthesis of a specialized repertoire of mRNAs and, together with other initiation factors, stimulates binding of mRNA and methionyl-tRNAi to the 40S ribosome. The eIF-3 complex specifically targets and initiates translation of a subset of mRNAs involved in cell proliferation. The polypeptide is Eukaryotic translation initiation factor 3 subunit J (Drosophila mojavensis (Fruit fly)).